The primary structure comprises 409 residues: Tyrosine--tRNA ligase (409 aa).

Residue Y35 participates in L-tyrosine binding. Positions 40–49 (CTAESLHVGS) match the 'HIGH' region motif. L-tyrosine is bound by residues Y172 and Q176. The 'KMSKS' region signature appears at 232 to 236 (KMGKT). Position 235 (K235) interacts with ATP. The region spanning 343–409 (ISILDLVILS…KKKHIKVELI (67 aa)) is the S4 RNA-binding domain.

The protein belongs to the class-I aminoacyl-tRNA synthetase family. TyrS type 1 subfamily. As to quaternary structure, homodimer.

It localises to the cytoplasm. The enzyme catalyses tRNA(Tyr) + L-tyrosine + ATP = L-tyrosyl-tRNA(Tyr) + AMP + diphosphate + H(+). Functionally, catalyzes the attachment of tyrosine to tRNA(Tyr) in a two-step reaction: tyrosine is first activated by ATP to form Tyr-AMP and then transferred to the acceptor end of tRNA(Tyr). This Pelagibacter ubique (strain HTCC1062) protein is Tyrosine--tRNA ligase.